The primary structure comprises 129 residues: Cortical cell-delineating protein (129 aa).

Positions 1-19 form a signal peptide, or 21; sequence MAPKVALFLALSLLFAATA. Asn25 carries an N-linked (GlcNAc...) asparagine glycan. 2 tandem repeats follow at residues 29–34 and 35–40. The 2 X 6 AA tandem repeats of P-V-V-P-T-P stretch occupies residues 29 to 40; sequence PVVPTPPVVPTP.

To carrot DC2.15 and PEMB3. As to expression, cortical ground meristem of developing roots.

Delineates a novel subset of developing cortical cells. It is probably involved in some aspect of transport of molecules to or from the vasculature. In Zea mays (Maize), this protein is Cortical cell-delineating protein.